The sequence spans 372 residues: 3-galactosyl-N-acetylglucosaminide 4-alpha-L-fucosyltransferase FUT3 (372 aa).

Residues 1–15 (MDPLGAAKTQWPWRR) are Cytoplasmic-facing. A helical; Signal-anchor for type II membrane protein transmembrane segment spans residues 16 to 34 (CLAALLFQLLVAVCFFSYL). The Lumenal segment spans residues 35 to 372 (RVSRDDATGS…MVRSIAAWFT (338 aa)). The interval 40–68 (DATGSPRPGLMAVEPVTGAPGGSSRQDTT) is disordered. N-linked (GlcNAc...) asparagine glycosylation is found at asparagine 165 and asparagine 196.

This sequence belongs to the glycosyltransferase 10 family. Post-translationally, glycosylated.

The protein localises to the golgi apparatus. It localises to the golgi stack membrane. It carries out the reaction a beta-D-galactosyl-(1-&gt;3)-N-acetyl-beta-D-glucosaminyl derivative + GDP-beta-L-fucose = a beta-D-galactosyl-(1-&gt;3)-[alpha-L-fucosyl-(1-&gt;4)]-N-acetyl-beta-D-glucosaminyl derivative + GDP + H(+). It catalyses the reaction an N-acetyl-alpha-neuraminyl-(2-&gt;3)-beta-D-galactosyl-(1-&gt;4)-N-acetyl-beta-D-glucosaminyl derivative + GDP-beta-L-fucose = an alpha-Neu5Ac-(2-&gt;3)-beta-D-Gal-(1-&gt;4)-[alpha-L-Fuc-(1-&gt;3)]-beta-D-GlcNAc derivative + GDP + H(+). The enzyme catalyses a beta-D-galactosyl-(1-&gt;4)-N-acetyl-beta-D-glucosaminyl derivative + GDP-beta-L-fucose = a beta-D-galactosyl-(1-&gt;4)-[alpha-L-fucosyl-(1-&gt;3)]-N-acetyl-beta-D-glucosaminyl derivative + GDP + H(+). The catalysed reaction is an alpha-Neu5Ac-(2-&gt;3)-beta-D-Gal-(1-&gt;4)-beta-D-GlcNAc-(1-&gt;3)-beta-D-Gal-(1-&gt;4)-[alpha-L-Fuc-(1-&gt;3)]-beta-D-GlcNAc derivative + GDP-beta-L-fucose = an alpha-Neu5Ac-(2-&gt;3)-beta-D-Gal-(1-&gt;4)-[alpha-L-Fuc-(1-&gt;3)]-beta-D-GlcNAc-(1-&gt;3)-beta-D-Gal-(1-&gt;4)-[alpha-L-Fuc-(1-&gt;3)]-beta-D-GlcNAc derivative + GDP + H(+). It carries out the reaction Lc4Cer + GDP-beta-L-fucose = a lactoside III(4)-a-Fuc-Lc4Cer + GDP + H(+). It catalyses the reaction a beta-D-Gal-(1-&gt;3)-beta-D-GlcNAc-(1-&gt;3)-beta-D-Gal-(1-&gt;4)-beta-D-Glc-(1&lt;-&gt;1')-Cer(d18:1(4E)) + GDP-beta-L-fucose = a III(4)-a-Fuc-Lc4Cer(d18:1(4E)) + GDP + H(+). The enzyme catalyses N-acetyl-alpha-neuraminosyl-(2-&gt;3)-beta-D-galactosyl-(1-&gt;3)-[N-acetyl-alpha-neuraminosyl-(2-&gt;6)]-N-acetyl-beta-D-glucosaminyl-(1-&gt;3)-beta-D-galactosyl-(1-&gt;4)-beta-D-glucosyl-(1&lt;-&gt;1')-N-acyl-sphing-4-enine + GDP-beta-L-fucose = N-acetyl-alpha-neuraminosyl-(2-&gt;3)-beta-D-galactosyl-(1-&gt;3)-alpha-L-fucosyl-(1-&gt;4)-[N-acetyl-alpha-neuraminosyl-(2-&gt;6)-N-acetyl-beta-D-glucosaminyl-(1-&gt;3)]-beta-D-galactosyl-(1-&gt;4)-beta-D-glucosyl-(1&lt;-&gt;1')-N-acyl-sphing-4-enine + GDP + H(+). The catalysed reaction is N-acetyl-alpha-neuraminosyl-(2-&gt;3)-beta-D-galactosyl-(1-&gt;3)-N-acetyl-beta-D-glucosaminyl-(1-&gt;3)-beta-D-galactosyl-(1-&gt;4)-beta-D-glucosyl-(1&lt;-&gt;1')-N-acyl-sphing-4-enine + GDP-beta-L-fucose = N-acetyl-alpha-neuraminosyl-(2-&gt;3)-beta-D-galactosyl-(1-&gt;3)-alpha-L-fucosyl-(1-&gt;4)-[N-acetyl-beta-D-glucosaminyl-(1-&gt;3)]-beta-D-galactosyl-(1-&gt;4)-beta-D-glucosyl-(1&lt;-&gt;1')-N-acyl-sphing-4-enine + GDP + H(+). It carries out the reaction beta-D-galactosyl-(1-&gt;3)-N-acetyl-D-glucosamine + GDP-beta-L-fucose = beta-D-galactosyl-(1-&gt;3)-[alpha-L-fucosyl-(1-&gt;4)]-N-acetyl-D-glucosamine + GDP + H(+). It catalyses the reaction alpha-L-Fuc-(1-&gt;2)-beta-D-Gal-(1-&gt;3)-D-GlcNAc + GDP-beta-L-fucose = alpha-L-Fuc-(1-&gt;2)-beta-D-Gal-(1-&gt;3)-[alpha-L-Fuc-(1-&gt;4)]-D-GlcNAc + GDP + H(+). The enzyme catalyses alpha-L-Fuc-(1-&gt;2)-beta-D-Gal-(1-&gt;4)-D-GlcNAc + GDP-beta-L-fucose = alpha-L-Fuc-(1-&gt;2)-beta-D-Gal-(1-&gt;4)-[alpha-L-Fuc-(1-&gt;3)]-D-GlcNAc + GDP + H(+). The catalysed reaction is beta-D-galactosyl-(1-&gt;4)-N-acetyl-D-glucosamine + GDP-beta-L-fucose = beta-D-galactosyl-(1-&gt;4)-[alpha-L-fucosyl-(1-&gt;3)]-N-acetyl-D-glucosamine + GDP + H(+). It carries out the reaction lactose + GDP-beta-L-fucose = beta-D-galactosyl-(1-&gt;4)-[alpha-L-fucosyl-(1-&gt;3)]-D-glucose + GDP + H(+). It catalyses the reaction an alpha-Neu5Ac-(2-&gt;3)-beta-D-Gal-(1-&gt;3)-D-GlcNAc derivative + GDP-beta-L-fucose = an alpha-Neu5Ac-(2-&gt;3)-beta-D-Gal-(1-&gt;3)-[alpha-L-Fuc-(1-&gt;4)]-beta-D-GlcNAc derivative + GDP + H(+). It participates in protein modification; protein glycosylation. In terms of biological role, catalyzes the transfer of L-fucose, from a guanosine diphosphate-beta-L-fucose, to both the subterminal N-acetyl glucosamine (GlcNAc) of type 1 chain (beta-D-Gal-(1-&gt;3)-beta-D-GlcNAc) glycolipids and oligosaccharides via an alpha(1,4) linkage, and the subterminal glucose (Glc) or GlcNAc of type 2 chain (beta-D-Gal-(1-&gt;4)-beta-D-GlcNAc) oligosaccharides via an alpha(1,3) linkage, independently of the presence of terminal alpha-L-fucosyl-(1,2) moieties on the terminal galactose of these acceptors and participates in the blood groups Lewis determination and expression of Lewis a (Le(a)), lewis b (Le(b)), Lewis x/SSEA-1 (Le(x)) and lewis y (Le(y)) antigens. Also catalyzes the transfer of L-fucose to subterminal GlcNAc of sialyl- and disialyl-lactotetraosylceramide to produce sialyl Lewis a (sLe(a)) and disialyl Lewis a via an alpha(1,4) linkage and therefore may regulate cell surface sialyl Lewis a expression and consequently regulates adhesive properties to E-selectin, cell proliferation and migration. Catalyzes the transfer of an L-fucose to 3'-sialyl-N-acetyllactosamine by an alpha(1,3) linkage, which allows the formation of sialyl-Lewis x structure and therefore may regulate the sialyl-Lewis x surface antigen expression and consequently adhesive properties to E-selectin. Prefers type 1 chain over type 2 acceptors. Type 1 tetrasaccharide is a better acceptor than type 1 disaccharide suggesting that a beta anomeric configuration of GlcNAc in the substrate is preferred. Lewis-positive (Le(+)) individuals have an active enzyme while Lewis-negative (Le(-)) individuals have an inactive enzyme. This chain is 3-galactosyl-N-acetylglucosaminide 4-alpha-L-fucosyltransferase FUT3, found in Pongo pygmaeus (Bornean orangutan).